Reading from the N-terminus, the 309-residue chain is MEEEYESRRLRRWEELDTDILVRIFQKFSVFELTSGLAHVCRGWRAACCDPILWKTVDLSNMRSSFIKIPLEPYVYVERRSDEALTRILKLSMNLSGGSTRTLIFHFNLFLSDDQLTYTAERCPGLRRVVLPAWNRIKKTGICKAIRIWKDLESLTMPSIANPPYLLTEIAKNCKNFKELKIMGPFEVFFANTLITCLPNIKTLSIRCSAIKREALMKILDGLPSLEVLNISHSHLVEYSGWQPQQKVIVRELDKTIMEKTARLKKFLTCMDHKTCVMCQRTENDEGIVRWYKYEEGDWKVDEVSSLHL.

In terms of domain architecture, F-box spans 10-57; sequence LRRWEELDTDILVRIFQKFSVFELTSGLAHVCRGWRAACCDPILWKTV. LRR repeat units lie at residues 77-107, 108-133, 159-184, and 208-233; these read VERR…IFHF, NLFL…VLPA, SIAN…KIMG, and CSAI…NISH.

The protein is F-box/LRR-repeat protein At3g48880 of Arabidopsis thaliana (Mouse-ear cress).